We begin with the raw amino-acid sequence, 654 residues long: MNIESKIKELTEKLNQYAYEYYTLDEPSVEDSEYDRLYQELVKLEAENPQLTRADSPTHRTGGVILDGFVKFRHPYNLYSLGDVFSREELAVWEERVRKEIANPEYICELKIDGLSLSLYYENGLLMTAATRGDGTTGENITENVKRIKDVPLKLKEAIDIVVRGEAYLPRKNFAKLNKERELEGATPFANPRNAAAGTLRQLDTKIVAKRGLATFLYQEASPATNDTQEEVLEYFEELGFQVNPERKFARNMDEIWEFIEEATRLRDELPYDIDGVVVKVNNLAEQEELGFTVKAPRWAIAYKFPAEQAETEILSVDWTVGRTGVVTPTANMTPVLLAQTTVARATLHNVDYIEEKDIRIGDHVLIYKAGDIIPKVGKVLLDKRPEGLEGLEIPTKCPECGSELIHFEDEVALRCVNPLCPAQIREKLIHFASRDAMNIVGLGPSVISQLFDKKLVADVADLYQLTIEDLLTLDKVKETLAQKIVSAIAQSRENSAEKLLFGLGIRHVGGKAAKLLLERFANLRALSKATEEEISEIPSLGGVIATAVVSYFETDGAKILLDELENAGVNFDYLGAVNIEGILSGKTVVLTGKLTTLKRSEAKEKLEALGANVSGSVSKKTDLVVAGEEAGSKLTKAQDLGIEIWSEQDLLDL.

NAD(+) is bound by residues 31–35 (DSEYD), 80–81 (SL), and glutamate 109. The active-site N6-AMP-lysine intermediate is lysine 111. Arginine 132, glutamate 166, lysine 280, and lysine 304 together coordinate NAD(+). Zn(2+)-binding residues include cysteine 398, cysteine 401, cysteine 416, and cysteine 421. In terms of domain architecture, BRCT spans 579–654 (NIEGILSGKT…IWSEQDLLDL (76 aa)).

The protein belongs to the NAD-dependent DNA ligase family. LigA subfamily. The cofactor is Mg(2+). Requires Mn(2+) as cofactor.

It catalyses the reaction NAD(+) + (deoxyribonucleotide)n-3'-hydroxyl + 5'-phospho-(deoxyribonucleotide)m = (deoxyribonucleotide)n+m + AMP + beta-nicotinamide D-nucleotide.. Functionally, DNA ligase that catalyzes the formation of phosphodiester linkages between 5'-phosphoryl and 3'-hydroxyl groups in double-stranded DNA using NAD as a coenzyme and as the energy source for the reaction. It is essential for DNA replication and repair of damaged DNA. This is DNA ligase from Lactococcus lactis subsp. lactis (strain IL1403) (Streptococcus lactis).